The chain runs to 90 residues: Auxin-responsive protein SAUR22 (90 aa).

The protein belongs to the ARG7 family.

It localises to the cell membrane. In terms of biological role, functions as a positive effector of cell expansion through modulation of auxin transport. This is Auxin-responsive protein SAUR22 from Arabidopsis thaliana (Mouse-ear cress).